The following is a 140-amino-acid chain: 3-hydroxyacyl-[acyl-carrier-protein] dehydratase FabZ (140 aa).

H47 is an active-site residue.

The protein belongs to the thioester dehydratase family. FabZ subfamily.

The protein resides in the cytoplasm. The enzyme catalyses a (3R)-hydroxyacyl-[ACP] = a (2E)-enoyl-[ACP] + H2O. Involved in unsaturated fatty acids biosynthesis. Catalyzes the dehydration of short chain beta-hydroxyacyl-ACPs and long chain saturated and unsaturated beta-hydroxyacyl-ACPs. The polypeptide is 3-hydroxyacyl-[acyl-carrier-protein] dehydratase FabZ (Streptococcus pneumoniae (strain 70585)).